A 778-amino-acid chain; its full sequence is Ent-trachylobane synthase KSL2, chloroplastic (778 aa).

The N-terminal 37 residues, 1 to 37, are a transit peptide targeting the chloroplast; it reads MLLTCTNSLKISSQAKEWESKTLTGMSLEQLNKRIRI. Positions 529, 533, 672, 673, and 680 each coordinate Mg(2+). The DDXXD motif signature appears at 529-533; sequence DDFFD.

It belongs to the terpene synthase family. It depends on Mg(2+) as a cofactor.

It localises to the plastid. The protein resides in the chloroplast. It carries out the reaction ent-copalyl diphosphate = ent-trachylobane + diphosphate. The enzyme catalyses ent-copalyl diphosphate = ent-kaur-16-ene + diphosphate. It participates in secondary metabolite biosynthesis; terpenoid biosynthesis. In terms of biological role, diterpene cyclase involved in the biosynthesis of labdane-related diterpenoids (LRDs) natural products. Catalyzes the cyclization of ent-CDP into ent-trachylobane as a major and ent-kaurene as a minor product. In Ricinus communis (Castor bean), this protein is Ent-trachylobane synthase KSL2, chloroplastic.